A 365-amino-acid chain; its full sequence is Methylthioribose-1-phosphate isomerase (365 aa).

The active-site Proton donor is the aspartate 249.

Belongs to the eIF-2B alpha/beta/delta subunits family. MtnA subfamily.

The protein resides in the cytoplasm. It is found in the nucleus. The catalysed reaction is 5-(methylsulfanyl)-alpha-D-ribose 1-phosphate = 5-(methylsulfanyl)-D-ribulose 1-phosphate. It participates in amino-acid biosynthesis; L-methionine biosynthesis via salvage pathway; L-methionine from S-methyl-5-thio-alpha-D-ribose 1-phosphate: step 1/6. In terms of biological role, catalyzes the interconversion of methylthioribose-1-phosphate (MTR-1-P) into methylthioribulose-1-phosphate (MTRu-1-P). This chain is Methylthioribose-1-phosphate isomerase, found in Ostreococcus lucimarinus (strain CCE9901).